The primary structure comprises 121 residues: uncharacterized protein (121 aa).

This sequence to E.coli YcjD and H.influenzae HI_1162.

This is an uncharacterized protein from Haemophilus influenzae (strain ATCC 51907 / DSM 11121 / KW20 / Rd).